Here is a 160-residue protein sequence, read N- to C-terminus: H/ACA ribonucleoprotein complex subunit 2 (160 aa).

Ser15 is modified (phosphoserine). At Thr23 the chain carries Phosphothreonine.

The protein belongs to the eukaryotic ribosomal protein eL8 family. In terms of assembly, component of the box H/ACA small nucleolar ribonucleoprotein (H/ACA snoRNP) complex consisting of Nop60B, Gar1, NPH2 and Nop10, and associated with H/ACA-type snoRNAs.

Its subcellular location is the nucleus. It localises to the nucleolus. Component of the box H/ACA small nucleolar ribonucleoprotein (H/ACA snoRNP) complex, which catalyzes pseudouridylation of rRNA. This involves the isomerization of uridine such that the ribose is subsequently attached to C5, instead of the normal N1. Pseudouridine ('psi') residues may serve to stabilize the conformation of rRNAs. Required for ribosome biogenesis. H/ACA snoRNP complex-dependent ribosome biogenesis is important in female germline cell differentiation during oogenesis. This is H/ACA ribonucleoprotein complex subunit 2 from Drosophila melanogaster (Fruit fly).